Here is a 239-residue protein sequence, read N- to C-terminus: NAD(P)H-hydrate epimerase (239 aa).

Residues 14–220 form the YjeF N-terminal domain; that stretch reads AAALDQELMS…EMAEQYNLDI (207 aa). 64–68 provides a ligand contact to (6S)-NADPHX; it reads NNGGD. Residues Asn65 and Asp126 each contribute to the K(+) site. Residues 130-136 and Asp159 contribute to the (6S)-NADPHX site; that span reads GFSFSGE. Ser162 lines the K(+) pocket.

This sequence belongs to the NnrE/AIBP family. K(+) is required as a cofactor.

The protein localises to the cytoplasm. It localises to the mitochondrion. The catalysed reaction is (6R)-NADHX = (6S)-NADHX. It carries out the reaction (6R)-NADPHX = (6S)-NADPHX. Functionally, catalyzes the epimerization of the S- and R-forms of NAD(P)HX, a damaged form of NAD(P)H that is a result of enzymatic or heat-dependent hydration. This is a prerequisite for the S-specific NAD(P)H-hydrate dehydratase to allow the repair of both epimers of NAD(P)HX. The polypeptide is NAD(P)H-hydrate epimerase (Phaeosphaeria nodorum (strain SN15 / ATCC MYA-4574 / FGSC 10173) (Glume blotch fungus)).